The following is a 411-amino-acid chain: MPSVFWILFDGGGDRPVGGRTPFHTAFKPTIDYLTSLGSCGILDPIAPGVRPGSDTAHLALFGYDPYKYYTGRGAFEALGAGLELKPGDVAFRTNLATIDDNGMVLDRRAGRYITPEEVEAVENLMANIAEDIKRKYGVEIIYKSTVEHRGVLVLRGSVSHKVSDTDPHKVGAKLLESRPLENSKEAVLTAEVINEVTKRFSEVAKDLEINRKRRLEGRLPINAILLRGGGYMPQIEPVRERYNIKAAAIAGVALIRGVARAVGMDVYTARGLGGTKDDMFDEAVRLAVELMGRYDLVFLHVKGTDSASHDGDFKGKVSVIERLDKALTPYLDKLLNNYVVITSDHATPISIKEHTGESVPILLYGPDVVTDDVSKFSELTCWRGALGRIRGIDVMPILGSYLALTEKFGE.

It belongs to the BPG-independent phosphoglycerate mutase family. A-PGAM subfamily.

It carries out the reaction (2R)-2-phosphoglycerate = (2R)-3-phosphoglycerate. The protein operates within carbohydrate degradation; glycolysis; pyruvate from D-glyceraldehyde 3-phosphate: step 3/5. Functionally, catalyzes the interconversion of 2-phosphoglycerate and 3-phosphoglycerate. The chain is 2,3-bisphosphoglycerate-independent phosphoglycerate mutase from Pyrobaculum islandicum (strain DSM 4184 / JCM 9189 / GEO3).